Here is a 1572-residue protein sequence, read N- to C-terminus: Multiple epidermal growth factor-like domains protein 6 (1572 aa).

An N-terminal signal peptide occupies residues 1-26 (MPVGVEARASWRVVALTLLLLPAVPA). The EMI domain occupies 40 to 121 (MPHVCAEQKL…QKPGQEGCLS (82 aa)). Cystine bridges form between Cys44-Cys107, Cys73-Cys79, Cys106-Cys119, Cys126-Cys137, Cys133-Cys146, Cys148-Cys161, Cys167-Cys178, Cys174-Cys187, Cys189-Cys202, Cys291-Cys302, Cys298-Cys311, Cys313-Cys326, Cys418-Cys429, Cys425-Cys438, Cys440-Cys453, Cys522-Cys535, Cys529-Cys542, Cys544-Cys553, Cys566-Cys578, Cys572-Cys585, Cys587-Cys596, Cys609-Cys621, Cys615-Cys628, Cys630-Cys639, Cys788-Cys797, Cys791-Cys804, Cys806-Cys815, Cys832-Cys840, Cys834-Cys847, Cys849-Cys858, Cys871-Cys884, Cys875-Cys891, Cys893-Cys902, Cys915-Cys927, Cys921-Cys934, and Cys936-Cys945. Residues 122–162 (DVDECANANGGCEGPCCNTVGGFYCRCPPGYQLQGDGKTCQ) form the EGF-like 1; calcium-binding domain. Residues 163 to 203 (DVDECRSHNGGCQHRCVNTPGSYLCECKPGFRLHTDGRTCL) form the EGF-like 2; calcium-binding domain. The EGF-like 3; calcium-binding domain maps to 287–327 (DVDECALGLAQCAHGCLNTQGSFKCVCHAGYELGADGRQCY). The region spanning 414-454 (DVDECASGHSGCEHHCSNLAGSFQCFCEAGYRLDEDRRGCT) is the EGF-like 4; calcium-binding domain. 17 EGF-like domains span residues 518 to 554 (FGHD…IICN), 562 to 597 (FGKN…AHCE), 605 to 640 (YGKH…RFCH), 785 to 816 (QEIC…SRCQ), 829 to 859 (QMRC…LSCQ), 867 to 903 (WGPD…PQCE), 911 to 946 (FGPG…SFCE), 997 to 1032 (FGLN…PTCL), 1040 to 1075 (YGKN…LACE), 1083 to 1118 (HGAG…DKCQ), 1131 to 1161 (EEHC…SHCE), 1169 to 1204 (FGEA…PGCE), 1256 to 1291 (YGPG…ADCS), 1299 to 1334 (FGPS…GHCE), 1342 to 1377 (FGKG…PHCE), 1390 to 1420 (LLEC…QACE), and 1428 to 1463 (HGSG…QFCE). Asn1000 carries an N-linked (GlcNAc...) asparagine glycan. Disulfide bonds link Cys1001–Cys1013, Cys1007–Cys1020, Cys1022–Cys1031, Cys1044–Cys1056, Cys1050–Cys1063, Cys1065–Cys1074, Cys1087–Cys1099, Cys1093–Cys1106, Cys1108–Cys1117, Cys1134–Cys1142, Cys1136–Cys1149, Cys1151–Cys1160, Cys1173–Cys1185, Cys1177–Cys1192, Cys1194–Cys1203, Cys1260–Cys1272, Cys1266–Cys1279, Cys1281–Cys1290, Cys1303–Cys1315, Cys1309–Cys1322, Cys1324–Cys1333, Cys1346–Cys1358, Cys1352–Cys1365, Cys1367–Cys1376, Cys1393–Cys1401, Cys1395–Cys1408, Cys1410–Cys1419, Cys1432–Cys1444, Cys1438–Cys1451, and Cys1453–Cys1462.

Its subcellular location is the secreted. The polypeptide is Multiple epidermal growth factor-like domains protein 6 (Megf6) (Mus musculus (Mouse)).